Here is a 396-residue protein sequence, read N- to C-terminus: MLRVGPGSLAITGGSRLLGHRVGSECCPFHLDCSLLEKQSAAPGQEGSADSHGSDKILAAAFSPSGEYFALTDDNKRLVLFRTKPAWEKISVRWVSRRCTALTFSPCGNHILVADKSGDVFSFSVPRALEQGRLELGHLSMLLDVTVSLDGKHIITCDRDEKIRVSCWGAPHVIMSFCLGHTEFVSQLLPLPGQEKLLLSGSGDGTLRLWEYESGKEVHSVTLRSLAHELEDQENKRFAVSRISCCSCNGIQLAVLCEGVPGIFLFSVSPEPRLTFTQYIALTHTPIDLDFDGSAFLWVLSGVREEPLLKYKELDDQWQSVSNDEELTRLTGIIQENWGDLEGAGAPESRFVGLYKAVFDNMATYLQKKELRLESEKRKAADGQVVLASKVQKTES.

WD repeat units lie at residues 52–91, 94–133, 137–178, and 180–220; these read HGSDKILAAAFSPSGEYFALTDDNKRLVLFRTKPAWEKIS, WVSRRCTALTFSPCGNHILVADKSGDVFSFSVPRALEQGR, GHLS…MSFC, and GHTE…EVHS.

Belongs to the WD repeat TRM82 family. Non-catalytic component of the METTL1-WDR4 complex, composed of mettl1 and wdr4.

Its subcellular location is the nucleus. It participates in tRNA modification; N(7)-methylguanine-tRNA biosynthesis. Non-catalytic component of the METTL1-WDR4 methyltransferase complex required for the formation of N(7)-methylguanine in a subset of RNA species, such as tRNAs, mRNAs and microRNAs (miRNAs). In the METTL1-WDR4 methyltransferase complex, wdr4 acts as a scaffold for tRNA-binding. Required for the formation of N(7)-methylguanine at position 46 (m7G46) in a large subset of tRNAs that contain the 5'-RAGGU-3' motif within the variable loop. M7G46 interacts with C13-G22 in the D-loop to stabilize tRNA tertiary structure and protect tRNAs from decay. Also required for the formation of N(7)-methylguanine at internal sites in a subset of mRNAs. Also required for methylation of a specific subset of miRNAs. The polypeptide is tRNA (guanine-N(7)-)-methyltransferase non-catalytic subunit wdr4 (wdr4) (Xenopus laevis (African clawed frog)).